A 229-amino-acid chain; its full sequence is Putative N-acetylmannosamine-6-phosphate 2-epimerase (229 aa).

It belongs to the NanE family.

It catalyses the reaction an N-acyl-D-glucosamine 6-phosphate = an N-acyl-D-mannosamine 6-phosphate. Its pathway is amino-sugar metabolism; N-acetylneuraminate degradation; D-fructose 6-phosphate from N-acetylneuraminate: step 3/5. Its function is as follows. Converts N-acetylmannosamine-6-phosphate (ManNAc-6-P) to N-acetylglucosamine-6-phosphate (GlcNAc-6-P). In Cutibacterium acnes (strain DSM 16379 / KPA171202) (Propionibacterium acnes), this protein is Putative N-acetylmannosamine-6-phosphate 2-epimerase.